The following is a 175-amino-acid chain: Crossover junction endodeoxyribonuclease RuvC (175 aa).

Active-site residues include D8, E68, and D140. The Mg(2+) site is built by D8, E68, and D140.

Belongs to the RuvC family. As to quaternary structure, homodimer which binds Holliday junction (HJ) DNA. The HJ becomes 2-fold symmetrical on binding to RuvC with unstacked arms; it has a different conformation from HJ DNA in complex with RuvA. In the full resolvosome a probable DNA-RuvA(4)-RuvB(12)-RuvC(2) complex forms which resolves the HJ. The cofactor is Mg(2+).

Its subcellular location is the cytoplasm. It carries out the reaction Endonucleolytic cleavage at a junction such as a reciprocal single-stranded crossover between two homologous DNA duplexes (Holliday junction).. Its function is as follows. The RuvA-RuvB-RuvC complex processes Holliday junction (HJ) DNA during genetic recombination and DNA repair. Endonuclease that resolves HJ intermediates. Cleaves cruciform DNA by making single-stranded nicks across the HJ at symmetrical positions within the homologous arms, yielding a 5'-phosphate and a 3'-hydroxyl group; requires a central core of homology in the junction. The consensus cleavage sequence is 5'-(A/T)TT(C/G)-3'. Cleavage occurs on the 3'-side of the TT dinucleotide at the point of strand exchange. HJ branch migration catalyzed by RuvA-RuvB allows RuvC to scan DNA until it finds its consensus sequence, where it cleaves and resolves the cruciform DNA. This is Crossover junction endodeoxyribonuclease RuvC from Pseudomonas fluorescens (strain Pf0-1).